The following is a 454-amino-acid chain: MTDLLNDRLPPQNIEAEQAVLGAIFLQPSALTLASEVLIPDDFYRMSHQKIYNAMLVLGDRGEPVDLVTVTSELANTDLLEEVGGISYLTDIANSVPTAANIEYYAKIVEEKSILRRLIRTATTIAQDGYTREDEVEDLLSEAEKTIMEVAQRKNTSAFQNIKDVLVQTYDNIEQLHNRKGDITGIPTGFTELDRMTAGFQRNDLIIVAARPSVGKTAFALNIAQNVATKTDESVAIFSLEMGAEQLVMRMLCAEGNINAQNLRTGNLTEEDWGKLTMAMGSLSNSGIYIDDTPGIRVSEIRAKCRRLKQESGLGMILIDYLQLIQGSGRSKDNRQQEVSEISRELKSIARELQVPVIALSQLSRGVEQRQDKRPMMSDIRESGSIEQDADIVAFLYRDDYYDKETENKNIIEIIIAKQRNGPVGTVSLAFVKEYNKFVNLERRFDDAGVPPGA.

The SF4 helicase domain maps to 179 to 445; the sequence is RKGDITGIPT…NKFVNLERRF (267 aa). ATP is bound at residue 210-217; that stretch reads ARPSVGKT.

The protein belongs to the helicase family. DnaB subfamily. The DNA replisome assembles sequentially on oriC in this order; DnaA, DnaD, DnaB, DnaI-DnaC helicase. Monomer in the absence of ATP, in its presence forms a probable homohexamer which is not active as a helicase in vitro. Interacts separately and simultaneously with helicase loaders DnaB and DnaI. Interaction with DnaB does not require ATP. Interaction with DnaI requires ATP, probably forms a DnaC(6):DnaI(6) complex, which is not active as a helicase.

The protein resides in the cytoplasm. It is found in the nucleoid. It carries out the reaction Couples ATP hydrolysis with the unwinding of duplex DNA at the replication fork by translocating in the 5'-3' direction. This creates two antiparallel DNA single strands (ssDNA). The leading ssDNA polymer is the template for DNA polymerase III holoenzyme which synthesizes a continuous strand.. The enzyme catalyses ATP + H2O = ADP + phosphate + H(+). In terms of biological role, the main replicative DNA helicase, it participates in initiation and elongation during chromosome replication. Travels ahead of the DNA replisome, separating dsDNA into templates for DNA synthesis. The monomer has helicase activity in the presence of DnaI which is further increased by DnaB; the purified oligomeric form (probably a DnaC hexamer) does not have helicase activity in vitro, nor does the DnaC(6):DnaI(6) complex. The direction was not determined but is probably 5'-3'. Helicase activity requires an rNTP and is inactive with dNTPs. Has weak ATPase activity as a monomer, as an oligomer has ATPase activity which is stimulated by single-stranded (ss)DNA and further stimulated by DnaI and more by DnaB. Deletion of a single T residue in the promoter region (a run of 8 Ts becomes 7 Ts) decreases the helicase levels by 50%, decreasing DNA replication inititation during fast growth in rich medium. Suppresses the synthetic lethality of a dnaA1-yabA deletion for growth on rich medium. The polypeptide is Replicative DNA helicase DnaC (Bacillus subtilis (strain 168)).